The sequence spans 288 residues: Probable ketoamine kinase PM0587 (288 aa).

92–94 (EAL) lines the ATP pocket.

It belongs to the fructosamine kinase family.

Its function is as follows. Ketoamine kinase that phosphorylates ketoamines on the third carbon of the sugar moiety to generate ketoamine 3-phosphate. The protein is Probable ketoamine kinase PM0587 of Pasteurella multocida (strain Pm70).